A 157-amino-acid chain; its full sequence is Increased recombination centers protein 23 (157 aa).

Residues 1-6 (MIEALE) lie on the Cytoplasmic side of the membrane. The chain crosses the membrane as a helical span at residues 7-29 (IVLLLVIQSLQYICRTCIAFLLI). Over 30–33 (PFLG) the chain is Lumenal. A helical transmembrane segment spans residues 34 to 56 (LYAFDLFLYVYRMILYLSQMFNY). Residues 57-157 (KRKLGRSKTN…EEGYYIAGSI (101 aa)) lie on the Cytoplasmic side of the membrane.

The protein resides in the endoplasmic reticulum membrane. Is probably involved in a pathway contributing to genomic integrity. In Saccharomyces cerevisiae (strain ATCC 204508 / S288c) (Baker's yeast), this protein is Increased recombination centers protein 23 (IRC23).